A 144-amino-acid polypeptide reads, in one-letter code: Methylglyoxal synthase (144 aa).

Residues 1–144 (MNIALIAHDE…EEEQRKFLTD (144 aa)) form the MGS-like domain. Residues histidine 8, lysine 12, 34–37 (TGTT), and 54–55 (SG) contribute to the substrate site. Aspartate 60 serves as the catalytic Proton donor/acceptor. Histidine 87 provides a ligand contact to substrate.

The protein belongs to the methylglyoxal synthase family.

It catalyses the reaction dihydroxyacetone phosphate = methylglyoxal + phosphate. Its function is as follows. Catalyzes the formation of methylglyoxal from dihydroxyacetone phosphate. The chain is Methylglyoxal synthase from Exiguobacterium sibiricum (strain DSM 17290 / CCUG 55495 / CIP 109462 / JCM 13490 / 255-15).